The following is a 231-amino-acid chain: MRLAVIGAMEEEVTILRNKLENAKTETIAHCEFTTGEYEGTEVILLKSGIGKVNAAISTTLLLDRYKPDYVINTGSAGGFHHTLNVGDVVISTDVRHHDVDVTAFDYEYGQVPGLPAAYAADEKLISITEEAVSELDGIQVAKGTIATGDSFMNDPKRVEEVRARFSDLYAVEMEAAAVAQVCHQFKTPFVVIRALSDIAGKESHVSFDQFLEQAAVHSTELVLKVIKRIH.

Glutamate 12 acts as the Proton acceptor in catalysis. Substrate-binding positions include glycine 78, methionine 153, and 174-175 (ME). The Proton donor role is filled by aspartate 198.

Belongs to the PNP/UDP phosphorylase family. MtnN subfamily.

The enzyme catalyses S-adenosyl-L-homocysteine + H2O = S-(5-deoxy-D-ribos-5-yl)-L-homocysteine + adenine. The catalysed reaction is S-methyl-5'-thioadenosine + H2O = 5-(methylsulfanyl)-D-ribose + adenine. It catalyses the reaction 5'-deoxyadenosine + H2O = 5-deoxy-D-ribose + adenine. Its pathway is amino-acid biosynthesis; L-methionine biosynthesis via salvage pathway; S-methyl-5-thio-alpha-D-ribose 1-phosphate from S-methyl-5'-thioadenosine (hydrolase route): step 1/2. Its function is as follows. Catalyzes the irreversible cleavage of the glycosidic bond in both 5'-methylthioadenosine (MTA) and S-adenosylhomocysteine (SAH/AdoHcy) to adenine and the corresponding thioribose, 5'-methylthioribose and S-ribosylhomocysteine, respectively. Also cleaves 5'-deoxyadenosine, a toxic by-product of radical S-adenosylmethionine (SAM) enzymes, into 5-deoxyribose and adenine. This Bacillus subtilis (strain 168) protein is 5'-methylthioadenosine/S-adenosylhomocysteine nucleosidase.